A 242-amino-acid chain; its full sequence is Triosephosphate isomerase (242 aa).

Asn-9–Lys-11 is a binding site for substrate. His-90 acts as the Electrophile in catalysis. Glu-162 functions as the Proton acceptor in the catalytic mechanism. Substrate is bound by residues Gly-168, Ser-205, and Gly-226–Gly-227.

Belongs to the triosephosphate isomerase family. As to quaternary structure, homodimer.

The protein resides in the cytoplasm. The catalysed reaction is D-glyceraldehyde 3-phosphate = dihydroxyacetone phosphate. The protein operates within carbohydrate biosynthesis; gluconeogenesis. Its pathway is carbohydrate degradation; glycolysis; D-glyceraldehyde 3-phosphate from glycerone phosphate: step 1/1. In terms of biological role, involved in the gluconeogenesis. Catalyzes stereospecifically the conversion of dihydroxyacetone phosphate (DHAP) to D-glyceraldehyde-3-phosphate (G3P). The protein is Triosephosphate isomerase of Azoarcus sp. (strain BH72).